The primary structure comprises 198 residues: Recombination protein RecR (198 aa).

A C4-type zinc finger spans residues 56 to 71 (CDICGNVSEEPTCRIC). Residues 79–175 (AVVCVVEEPK…NVTRLASGLP (97 aa)) form the Toprim domain.

Belongs to the RecR family.

May play a role in DNA repair. It seems to be involved in an RecBC-independent recombinational process of DNA repair. It may act with RecF and RecO. The sequence is that of Recombination protein RecR from Saccharopolyspora erythraea (strain ATCC 11635 / DSM 40517 / JCM 4748 / NBRC 13426 / NCIMB 8594 / NRRL 2338).